The following is a 97-amino-acid chain: Small integral membrane protein 8 (97 aa).

The segment at 1–24 (MSSAPEPPTFKKEPPKEKDFQSPG) is disordered. Over residues 9-20 (TFKKEPPKEKDF) the composition is skewed to basic and acidic residues. The helical transmembrane segment at 48-67 (PVMAFGLVTLSLCVAYIGYL) threads the bilayer.

It belongs to the SMIM8 family.

The protein localises to the membrane. This is Small integral membrane protein 8 (SMIM8) from Pongo abelii (Sumatran orangutan).